A 647-amino-acid chain; its full sequence is Carboxypeptidase Z (647 aa).

A signal peptide spans 1–18 (MVPSLLLLLTGLFRATEP). Residues 35–157 (AQKAKCVDIS…AGEEEGCFDP (123 aa)) enclose the FZ domain. 5 cysteine pairs are disulfide-bonded: cysteine 40/cysteine 106, cysteine 48/cysteine 99, cysteine 90/cysteine 126, cysteine 115/cysteine 154, and cysteine 119/cysteine 143. One can recognise a Peptidase M14 domain in the interval 183–499 (KHHSYSQMVS…DALLNYMEMV (317 aa)). Residues histidine 245 and glutamate 248 each coordinate Zn(2+). Asparagine 278 is a glycosylation site (N-linked (GlcNAc...) asparagine). Residue histidine 377 participates in Zn(2+) binding. Glutamate 469 functions as the Proton donor/acceptor in the catalytic mechanism.

It belongs to the peptidase M14 family. In terms of assembly, interacts with WNT4 vie its FZ domain. Zn(2+) is required as a cofactor. In the early embryo it is initially expressed throughout the somites and subsequently becomes restricted to the sclerotome. Expressed in somites, paraxial head mesoderm and apical ectodermal ridge.

It localises to the secreted. The protein localises to the extracellular space. The protein resides in the extracellular matrix. Inhibited by 2-mercaptomethyl-3-guanidinoethylthiopropanoic acid (MGTA) and guanidinoethylmercaptosuccinic acid (GEMSA). Inhibited by chelating agents such as EDTA and EGTA. In terms of biological role, cleaves substrates with C-terminal arginine residues. Modulates the Wnt signaling pathway, probably by cleaving some undefined protein. Regulates the development of skeletal elements during development, probably by activating WNT4. The chain is Carboxypeptidase Z (CPZ) from Gallus gallus (Chicken).